A 506-amino-acid polypeptide reads, in one-letter code: Sodium-coupled neutral amino acid symporter 2 (506 aa).

Residues 1–23 (MKKAEMGRFNISPDEDSSSYSSN) are disordered. Residues 1-76 (MKKAEMGRFN…HPGTTSFGMS (76 aa)) are Cytoplasmic-facing. Residues 1-96 (MKKAEMGRFN…SGILGLSYAM (96 aa)) are regulates protein turnover upon amino acid deprivation. Ser12, Ser21, Ser22, and Ser55 each carry phosphoserine. A helical transmembrane segment spans residues 77 to 96 (VFNLSNAIVGSGILGLSYAM). Asn82 provides a ligand contact to Na(+). At 97–102 (ANTGIA) the chain is on the extracellular side. The helical transmembrane segment at 103 to 123 (LFIILLTFVSIFSLYSVHLLL) threads the bilayer. The Cytoplasmic portion of the chain corresponds to 124-158 (KTANEGGSLLYEQLGHKAFGMVGKLTASGSITMQN). Residues 159 to 177 (IGAMSSYLFIVKYELPLVI) traverse the membrane as a helical segment. Over 178–188 (QALMNIEDTNG) the chain is Extracellular. The chain crosses the membrane as a helical span at residues 189–209 (LWYLNGDYLVLLVSLVLILPL). Residues 210 to 217 (SLLRNLGY) lie on the Cytoplasmic side of the membrane. A helical membrane pass occupies residues 218 to 238 (LGYTSGLSLLCMMFFLIVVIF). Residues 239–292 (KKFQISCPAEIAFLVNETVNSSLTQPATFLPDMGFNRTESDSCQPRYFIFNSQT) lie on the Extracellular side of the membrane. A disulfide bond links Cys245 and Cys281. N-linked (GlcNAc...) asparagine glycans are attached at residues Asn258 and Asn274. A helical transmembrane segment spans residues 293-313 (VYAVPILTFSFVCHPAILPIY). Topologically, residues 314 to 329 (EELKGRSRRRMMNVSK) are cytoplasmic. A helical membrane pass occupies residues 330-350 (ISFFAMFLMYLLAALFGYLTF). Residues 351–371 (YGHVESELLHTYSSVMETDIL) are Extracellular-facing. A helical membrane pass occupies residues 372–392 (LLIVRLAVLVAVTLTVPVVIF). Thr386 is a binding site for Na(+). Over 393-413 (PIRSSITHLLCASKEFSWWRH) the chain is Cytoplasmic. A helical transmembrane segment spans residues 414–434 (SVITVSILVFTNLLVIFVPNI). At 435-436 (RD) the chain is on the extracellular side. The chain crosses the membrane as a helical span at residues 437–457 (IFGFIGASAAAMLIFILPSAF). The Cytoplasmic segment spans residues 458-472 (YIKLVKKEPMKSVQK). A helical transmembrane segment spans residues 473-495 (IGAMFFLLSGIVVMTGSMALIVL). Over 496-506 (DWVHNAPGGGH) the chain is Extracellular.

Belongs to the amino acid/polyamine transporter 2 family. In terms of processing, polyubiquitination by NEDD4L regulates the degradation and the activity of SLC38A2.

It localises to the cell membrane. The catalysed reaction is L-alanine(in) + Na(+)(in) = L-alanine(out) + Na(+)(out). It catalyses the reaction glycine(in) + Na(+)(in) = glycine(out) + Na(+)(out). It carries out the reaction L-serine(in) + Na(+)(in) = L-serine(out) + Na(+)(out). The enzyme catalyses L-proline(in) + Na(+)(in) = L-proline(out) + Na(+)(out). The catalysed reaction is L-methionine(in) + Na(+)(in) = L-methionine(out) + Na(+)(out). It catalyses the reaction L-histidine(in) + Na(+)(in) = L-histidine(out) + Na(+)(out). It carries out the reaction L-asparagine(in) + Na(+)(in) = L-asparagine(out) + Na(+)(out). The enzyme catalyses L-glutamine(in) + Na(+)(in) = L-glutamine(out) + Na(+)(out). The catalysed reaction is L-threonine(in) + Na(+)(in) = L-threonine(out) + Na(+)(out). It catalyses the reaction L-leucine(in) + Na(+)(in) = L-leucine(out) + Na(+)(out). It carries out the reaction L-phenylalanine(in) + Na(+)(in) = L-phenylalanine(out) + Na(+)(out). Inhibited by N-methyl-D-glucamine. Inhibited by choline. Allosteric regulation of sodium ions binding by pH. In terms of biological role, symporter that cotransports neutral amino acids and sodium ions from the extracellular to the intracellular side of the cell membrane. The transport is pH-sensitive, Li(+)-intolerant, electrogenic, driven by the Na(+) electrochemical gradient and cotransports of neutral amino acids and sodium ions with a stoichiometry of 1:1. May function in the transport of amino acids at the blood-brain barrier. May function in the transport of amino acids in the supply of maternal nutrients to the fetus through the placenta. Maintains a key metabolic glutamine/glutamate balance underpinning retrograde signaling by dendritic release of the neurotransmitter glutamate. Transports L-proline in differentiating osteoblasts for the efficient synthesis of proline-enriched proteins and provides proline essential for osteoblast differentiation and bone formation during bone development. The polypeptide is Sodium-coupled neutral amino acid symporter 2 (Bos taurus (Bovine)).